Reading from the N-terminus, the 469-residue chain is Tryptophan biosynthesis protein TrpCF (469 aa).

The interval 1-271 (MSEQLSEHIS…LAVRKIVLGE (271 aa)) is indole-3-glycerol phosphate synthase. The segment at 272–469 (HKVCGLTHPD…QQVFQQLRNY (198 aa)) is N-(5'-phosphoribosyl)anthranilate isomerase.

It in the N-terminal section; belongs to the TrpC family. The protein in the C-terminal section; belongs to the TrpF family. As to quaternary structure, monomer.

The enzyme catalyses N-(5-phospho-beta-D-ribosyl)anthranilate = 1-(2-carboxyphenylamino)-1-deoxy-D-ribulose 5-phosphate. The catalysed reaction is 1-(2-carboxyphenylamino)-1-deoxy-D-ribulose 5-phosphate + H(+) = (1S,2R)-1-C-(indol-3-yl)glycerol 3-phosphate + CO2 + H2O. It participates in amino-acid biosynthesis; L-tryptophan biosynthesis; L-tryptophan from chorismate: step 3/5. The protein operates within amino-acid biosynthesis; L-tryptophan biosynthesis; L-tryptophan from chorismate: step 4/5. In terms of biological role, bifunctional enzyme that catalyzes two sequential steps of tryptophan biosynthetic pathway. The first reaction is catalyzed by the isomerase, coded by the TrpF domain; the second reaction is catalyzed by the synthase, coded by the TrpC domain. The protein is Tryptophan biosynthesis protein TrpCF (trpCF) of Vibrio cholerae serotype O1 (strain ATCC 39315 / El Tor Inaba N16961).